Here is a 362-residue protein sequence, read N- to C-terminus: GDSL esterase/lipase 6 (362 aa).

The first 23 residues, 1–23, serve as a signal peptide directing secretion; that stretch reads MSSSSSMDLLMCLLLLISPVVLA. Serine 38 serves as the catalytic Nucleophile. Residues asparagine 50, asparagine 103, asparagine 107, asparagine 195, and asparagine 296 are each glycosylated (N-linked (GlcNAc...) asparagine). Catalysis depends on residues aspartate 323 and histidine 326.

The protein belongs to the 'GDSL' lipolytic enzyme family.

The protein resides in the secreted. The protein is GDSL esterase/lipase 6 (GLIP6) of Arabidopsis thaliana (Mouse-ear cress).